A 154-amino-acid chain; its full sequence is Myoglobin (154 aa).

Positions 2-148 constitute a Globin domain; that stretch reads GLSDEEWKKV…FRNDMASRYK (147 aa). Residue His-65 participates in nitrite binding. O2 is bound at residue His-65. His-94 is a heme b binding site.

It belongs to the globin family. As to quaternary structure, monomeric.

Its subcellular location is the cytoplasm. It localises to the sarcoplasm. The catalysed reaction is Fe(III)-heme b-[protein] + nitric oxide + H2O = Fe(II)-heme b-[protein] + nitrite + 2 H(+). It carries out the reaction H2O2 + AH2 = A + 2 H2O. Its function is as follows. Monomeric heme protein which primary function is to store oxygen and facilitate its diffusion within muscle tissues. Reversibly binds oxygen through a pentacoordinated heme iron and enables its timely and efficient release as needed during periods of heightened demand. Depending on the oxidative conditions of tissues and cells, and in addition to its ability to bind oxygen, it also has a nitrite reductase activity whereby it regulates the production of bioactive nitric oxide. Under stress conditions, like hypoxia and anoxia, it also protects cells against reactive oxygen species thanks to its pseudoperoxidase activity. This is Myoglobin (MB) from Varanus varius (Lace monitor lizard).